Here is a 327-residue protein sequence, read N- to C-terminus: NADPH-dependent aldose reductase GRE3 (327 aa).

Residue tyrosine 49 is the Proton donor of the active site. Histidine 111 is a substrate binding site. 219 to 286 contacts NADP(+); it reads SSFGPQSFIE…SSKKERLLGN (68 aa).

It belongs to the aldo/keto reductase family. As to quaternary structure, monomer.

The protein localises to the cytoplasm. Its subcellular location is the nucleus. The catalysed reaction is an alditol + NAD(+) = an aldose + NADH + H(+). It carries out the reaction an alditol + NADP(+) = an aldose + NADPH + H(+). Functionally, aldose reductase with a broad substrate specificity. Reduces the cytotoxic compound methylglyoxal (MG) to acetol and (R)-lactaldehyde under stress conditions. MG is synthesized via a bypath of glycolysis from dihydroxyacetone phosphate and is believed to play a role in cell cycle regulation and stress adaptation. In pentose-fermenting yeasts, aldose reductase catalyzes the reduction of xylose into xylitol. The purified enzyme catalyzes this reaction, but the inability of S.cerevisiae to grow on xylose as sole carbon source indicates that the physiological function is more likely methylglyoxal reduction. This chain is NADPH-dependent aldose reductase GRE3, found in Saccharomyces cerevisiae (strain ATCC 204508 / S288c) (Baker's yeast).